A 513-amino-acid chain; its full sequence is 2-isopropylmalate synthase (513 aa).

Positions leucine 5–valine 268 constitute a Pyruvate carboxyltransferase domain. Mn(2+)-binding residues include aspartate 14, histidine 202, histidine 204, and asparagine 239. A regulatory domain region spans residues arginine 394 to glycine 513.

Belongs to the alpha-IPM synthase/homocitrate synthase family. LeuA type 1 subfamily. Homodimer. Mn(2+) is required as a cofactor.

The protein resides in the cytoplasm. The enzyme catalyses 3-methyl-2-oxobutanoate + acetyl-CoA + H2O = (2S)-2-isopropylmalate + CoA + H(+). Its pathway is amino-acid biosynthesis; L-leucine biosynthesis; L-leucine from 3-methyl-2-oxobutanoate: step 1/4. In terms of biological role, catalyzes the condensation of the acetyl group of acetyl-CoA with 3-methyl-2-oxobutanoate (2-ketoisovalerate) to form 3-carboxy-3-hydroxy-4-methylpentanoate (2-isopropylmalate). The protein is 2-isopropylmalate synthase of Leptothrix cholodnii (strain ATCC 51168 / LMG 8142 / SP-6) (Leptothrix discophora (strain SP-6)).